The primary structure comprises 666 residues: Secreted protein ARB_01864 (666 aa).

The signal sequence occupies residues 1 to 18 (MRFSTLVSLAAWAAAALA). 7 N-linked (GlcNAc...) asparagine glycosylation sites follow: Asn160, Asn216, Asn342, Asn405, Asn594, Asn600, and Asn662. A disordered region spans residues 323-353 (RGSMKPRGVPNPTRRAIKGNATTSTQPYQHP).

It localises to the secreted. The chain is Secreted protein ARB_01864 from Arthroderma benhamiae (strain ATCC MYA-4681 / CBS 112371) (Trichophyton mentagrophytes).